A 313-amino-acid polypeptide reads, in one-letter code: DDRGK domain-containing protein 1 (313 aa).

Residues 1–28 form a helical membrane-spanning segment; the sequence is MVSPVVYLVVAALLVGLILFLTRGRGRA. The segment at 1–113 is mediates interaction with CDK5RAP3; sequence MVSPVVYLVV…IEKPVETHLS (113 aa). Over 29–313 the chain is Cytoplasmic; it reads AAAAQEPLHN…GRETPAQAPA (285 aa). Residues 40–88 form a disordered region; that stretch reads EVPAAAGRVARPQPLEPEEQRAAGRPRRRRDLGSRLQAQRRAQRVAWAD. Residues Ser-73 and Ser-113 each carry the phosphoserine modification. The segment covering 73 to 87 has biased composition (low complexity); sequence SRLQAQRRAQRVAWA. Residues 117 to 215 are mediates interaction with TRIP4; that stretch reads GAKKLRKLEE…MTEEQSHSFL (99 aa). Positions 130–185 are disordered; the sequence is RKAQREAEEAEREERKRLESQREAEWKKEEERLRLEEEQKEEEERKAQEEQAQREH. Positions 194-208 match the UFM1-interacting motif (UFIM) motif; it reads TFVVVEEGVGETMTE. Residues 215–313 form a mediates interaction with UFL1 region; the sequence is LAEFINYIKQ…GRETPAQAPA (99 aa). The region spanning 228 to 272 is the PCI domain; sequence VLLEDLASQVGLRTQDTINRIQDLLAEGTLTGVIDDRGKFIYITP. Residue Lys-266 forms a Glycyl lysine isopeptide (Lys-Gly) (interchain with G-Cter in UFM1) linkage.

The protein belongs to the DDRGK1 family. Component of the UFM1 ribosome E3 ligase (UREL) complex, composed of UFL1, DDRGK1 and CDK5RAP3. Interacts with (unphosphorylated) ERN1/IRE1-alpha; interaction is dependent on UFM1 and takes place in response to endoplasmic reticulum stress, regulating ERN1/IRE1-alpha stability. Interacts with NFKBIA. Interacts with SOX9. In terms of processing, ubiquitinated. Ubiquitination probably triggers proteasomal degradation and is negatively regulated by UFL1, the enzyme involved in the ufmylation of DDRGK1. Ufmylated; conjugated to ubiquitin-like protein UFM1, probably at Lys-266 by UFL1. The relevance of ufmylation is however unclear: as DDRGK1 acts as a substrate adapter for ufmylation, it is uncertain whether ufmylation is a collateral effect of the ufmylation process or whether it is required to regulate its activity.

Its subcellular location is the endoplasmic reticulum membrane. Component of the UFM1 ribosome E3 ligase (UREL) complex, a multiprotein complex that catalyzes ufmylation of endoplasmic reticulum-docked proteins. The UREL complex plays a key role in ribosome recycling by mediating mono-ufmylation of the RPL26/uL24 subunit of the 60S ribosome following ribosome dissociation: ufmylation weakens the junction between post-termination 60S subunits and SEC61 translocons, promoting release and recycling of the large ribosomal subunit from the endoplasmic reticulum membrane. Ufmylation of RPL26/uL24 and subsequent 60S ribosome recycling either take place after normal termination of translation or after ribosome stalling during cotranslational translocation at the endoplasmic reticulum. Within the UREL complex, DDRGK1 tethers the complex to the endoplasmic reticulum membrane to restrict its activity to endoplasmic reticulum-docked ribosomes and acts as an ufmylation 'reader': following RPL26/uL24 ufmylation, DDRGK1 specifically binds to ufmylated RPL26/uL24 via its UFIM motif, resulting in stable association between the 60S ribosome and the UREL complex, followed by dissociation of the 60S ribosome subunit from the endoplasmic reticulum membrane. The UREL complex is also involved in reticulophagy in response to endoplasmic reticulum stress by promoting ufmylation of proteins such as CYB5R3 and RPN1, thereby promoting lysosomal degradation of ufmylated proteins. Ufmylation-dependent reticulophagy inhibits the unfolded protein response (UPR) by regulating ERN1/IRE1-alpha stability. Acts as a regulator of immunity by promoting differentiation of B-cells into plasma cells: acts by promoting expansion of the endoplasmic reticulum and regulating the unfolded protein response (UPR). May also be required for TRIP4 ufmylation. May play a role in NF-kappa-B-mediated transcription through regulation of the phosphorylation and the degradation of NFKBIA, the inhibitor of NF-kappa-B. Plays a role in cartilage development through SOX9, inhibiting the ubiquitin-mediated proteasomal degradation of this transcriptional regulator. Required for stabilization and ufmylation of ATG9A. The sequence is that of DDRGK domain-containing protein 1 from Bos taurus (Bovine).